The chain runs to 158 residues: 6,7-dimethyl-8-ribityllumazine synthase (158 aa).

5-amino-6-(D-ribitylamino)uracil is bound by residues phenylalanine 22, 57 to 59 (AVE), and 81 to 83 (AVI). 86 to 87 (GT) is a (2S)-2-hydroxy-3-oxobutyl phosphate binding site. The active-site Proton donor is histidine 89. 5-amino-6-(D-ribitylamino)uracil is bound at residue phenylalanine 114. Arginine 128 contacts (2S)-2-hydroxy-3-oxobutyl phosphate.

This sequence belongs to the DMRL synthase family. Forms an icosahedral capsid composed of 60 subunits, arranged as a dodecamer of pentamers.

The enzyme catalyses (2S)-2-hydroxy-3-oxobutyl phosphate + 5-amino-6-(D-ribitylamino)uracil = 6,7-dimethyl-8-(1-D-ribityl)lumazine + phosphate + 2 H2O + H(+). It participates in cofactor biosynthesis; riboflavin biosynthesis; riboflavin from 2-hydroxy-3-oxobutyl phosphate and 5-amino-6-(D-ribitylamino)uracil: step 1/2. Catalyzes the formation of 6,7-dimethyl-8-ribityllumazine by condensation of 5-amino-6-(D-ribitylamino)uracil with 3,4-dihydroxy-2-butanone 4-phosphate. This is the penultimate step in the biosynthesis of riboflavin. The chain is 6,7-dimethyl-8-ribityllumazine synthase from Shewanella halifaxensis (strain HAW-EB4).